Consider the following 476-residue polypeptide: Cardiolipin synthase (476 aa).

A run of 2 helical transmembrane segments spans residues 2–22 (HLFI…IIFI) and 31–51 (WAWI…YILF). 2 PLD phosphodiesterase domains span residues 207–234 (INYR…GDEY) and 389–416 (EKGF…DIRS). Residues histidine 212, lysine 214, aspartate 219, histidine 394, lysine 396, and aspartate 401 contribute to the active site.

Belongs to the phospholipase D family. Cardiolipin synthase subfamily.

Its subcellular location is the cell membrane. It carries out the reaction 2 a 1,2-diacyl-sn-glycero-3-phospho-(1'-sn-glycerol) = a cardiolipin + glycerol. Its function is as follows. Catalyzes the reversible phosphatidyl group transfer from one phosphatidylglycerol molecule to another to form cardiolipin (CL) (diphosphatidylglycerol) and glycerol. This Clostridium perfringens (strain ATCC 13124 / DSM 756 / JCM 1290 / NCIMB 6125 / NCTC 8237 / Type A) protein is Cardiolipin synthase (cls).